The sequence spans 212 residues: Inactive ribonuclease-like protein 10 (212 aa).

The N-terminal stretch at 1-24 is a signal peptide; it reads MKVTLVHLLFMMLLLLLGLGVGLG. N-linked (GlcNAc...) asparagine glycosylation is found at Asn129 and Asn204.

Belongs to the pancreatic ribonuclease family. Post-translationally, the N-terminus is blocked. Glycosylated. Male-specific expression in proximal caput of the epididymis.

The protein localises to the secreted. In terms of biological role, secreted proximal epididymal protein required for post-testicular sperm maturation and male fertility. May be involved in sperm adhesion to the egg zona pellucida. Does not have ribonuclease activity. This is Inactive ribonuclease-like protein 10 (Rnase10) from Rattus norvegicus (Rat).